Consider the following 345-residue polypeptide: Biotin synthase (345 aa).

Residues 67 to 295 (YKVQLASLLS…KSRIRLSAGR (229 aa)) form the Radical SAM core domain. The [4Fe-4S] cluster site is built by cysteine 82, cysteine 86, and cysteine 89. Residues cysteine 126, cysteine 158, cysteine 218, and arginine 290 each contribute to the [2Fe-2S] cluster site.

The protein belongs to the radical SAM superfamily. Biotin synthase family. Homodimer. Requires [4Fe-4S] cluster as cofactor. [2Fe-2S] cluster is required as a cofactor.

The catalysed reaction is (4R,5S)-dethiobiotin + (sulfur carrier)-SH + 2 reduced [2Fe-2S]-[ferredoxin] + 2 S-adenosyl-L-methionine = (sulfur carrier)-H + biotin + 2 5'-deoxyadenosine + 2 L-methionine + 2 oxidized [2Fe-2S]-[ferredoxin]. Its pathway is cofactor biosynthesis; biotin biosynthesis; biotin from 7,8-diaminononanoate: step 2/2. In terms of biological role, catalyzes the conversion of dethiobiotin (DTB) to biotin by the insertion of a sulfur atom into dethiobiotin via a radical-based mechanism. This is Biotin synthase from Prochlorococcus marinus (strain NATL2A).